Here is a 309-residue protein sequence, read N- to C-terminus: Palmitoyltransferase ZDHHC19 (309 aa).

The next 2 helical transmembrane spans lie at 29-49 (LFAA…FAFP) and 59-79 (WAFP…LVSL). The region spanning 112 to 162 (QWCPKCCFHRPPRTYHCPWCNICVEDFDHHCKWVNNCIGHRNFRFFMLLVL) is the DHHC domain. The active-site S-palmitoyl cysteine intermediate is Cys142. Helical transmembrane passes span 160–180 (LVLS…IFLV) and 193–213 (IAIV…LLLL). The span at 280–294 (LHPPMSPSALNPPAP) shows a compositional bias: pro residues. Residues 280–309 (LHPPMSPSALNPPAPTSGSLQSREGTPGAW) are disordered.

The protein belongs to the DHHC palmitoyltransferase family.

Its subcellular location is the golgi apparatus membrane. It is found in the cytoplasm. It localises to the perinuclear region. The enzyme catalyses L-cysteinyl-[protein] + hexadecanoyl-CoA = S-hexadecanoyl-L-cysteinyl-[protein] + CoA. In terms of biological role, palmitoyltransferase that mediates palmitoylation oproteins, such as RRAS and SQSTM1. Catalyzes palmitoylation of RRAS, leading to increased cell viability. Acts as a positive regulator of autophagy by mediating palmitoylation of SQSTM1, promoting affinity between SQSTM1 and ATG8 proteins and recruitment of ubiquitinated cargo proteins to autophagosomes. Its function is as follows. (Microbial infection) Promotes Chikungunya virus (CHIKV) replication by mediating viral nsp1 palmitoylation. This chain is Palmitoyltransferase ZDHHC19, found in Homo sapiens (Human).